A 562-amino-acid polypeptide reads, in one-letter code: Calmodulin-binding protein 60 F (562 aa).

The disordered stretch occupies residues 1-22 (MENSMNNRGHGHNQEHADNLPE). The segment at 5 to 84 (MNNRGHGHNQ…STSRSTEPNK (80 aa)) is calmodulin-binding. The span at 12-22 (HNQEHADNLPE) shows a compositional bias: basic and acidic residues. The interval 154 to 273 (EDDKDWTREH…ALHKKLLKSN (120 aa)) is DNA-binding.

It belongs to the plant ACBP60 protein family. In terms of assembly, interacts with calmodulin (CaM).

Its subcellular location is the nucleus. Functionally, transcription activator that binds DNA in a sequence-specific manner, likely 5'-GAAATTTTGG-3', to promote the expression of target genes. The sequence is that of Calmodulin-binding protein 60 F from Arabidopsis thaliana (Mouse-ear cress).